A 246-amino-acid polypeptide reads, in one-letter code: Sulfate transporter CysZ (246 aa).

Helical transmembrane passes span 24–44 (LFVL…IGFA), 69–89 (IVWP…FTMV), 148–168 (LLVL…WILF), and 214–234 (LLIP…ATLF).

The protein belongs to the CysZ family.

The protein localises to the cell inner membrane. Its function is as follows. High affinity, high specificity proton-dependent sulfate transporter, which mediates sulfate uptake. Provides the sulfur source for the cysteine synthesis pathway. The protein is Sulfate transporter CysZ of Pseudomonas aeruginosa (strain ATCC 15692 / DSM 22644 / CIP 104116 / JCM 14847 / LMG 12228 / 1C / PRS 101 / PAO1).